We begin with the raw amino-acid sequence, 555 residues long: Vacuolar fusion protein MON1 homolog A (555 aa).

Over residues 1 to 12 (MAADMQRKRSSE) the composition is skewed to basic and acidic residues. Positions 1 to 87 (MAADMQRKRS…RGPPPLPADM (87 aa)) are disordered. 2 positions are modified to phosphoserine: Ser31 and Ser56. Thr61 carries the post-translational modification Phosphothreonine. Residue Ser91 is modified to Phosphoserine. Residues 114-147 (PGSSEDWLDPPGAVGRPATEPPREGTAEGDEEDA) form a disordered region.

Belongs to the MON1/SAND family. Interacts with CCZ1. Found in a complex with RMC1, CCZ1, MON1A and MON1B. The MON1A-CCZ1B complex interacts with RIMOC1. The MON1A-CCZ1B complex interacts with RAB7A and this interaction is enhanced in the presence of RIMOC1.

In terms of biological role, plays an important role in membrane trafficking through the secretory apparatus. Not involved in endocytic trafficking to lysosomes. Acts in concert with CCZ1, as a guanine exchange factor (GEF) for RAB7, promotes the exchange of GDP to GTP, converting it from an inactive GDP-bound form into an active GTP-bound form. The chain is Vacuolar fusion protein MON1 homolog A (MON1A) from Macaca fascicularis (Crab-eating macaque).